Consider the following 428-residue polypeptide: Enolase (428 aa).

Gln-163 lines the (2R)-2-phosphoglycerate pocket. Residue Glu-205 is the Proton donor of the active site. Residues Asp-242, Glu-285, and Asp-312 each contribute to the Mg(2+) site. Residues Lys-337, Arg-366, Ser-367, and Lys-388 each coordinate (2R)-2-phosphoglycerate. Residue Lys-337 is the Proton acceptor of the active site.

Belongs to the enolase family. Mg(2+) is required as a cofactor.

The protein localises to the cytoplasm. It is found in the secreted. The protein resides in the cell surface. The catalysed reaction is (2R)-2-phosphoglycerate = phosphoenolpyruvate + H2O. Its pathway is carbohydrate degradation; glycolysis; pyruvate from D-glyceraldehyde 3-phosphate: step 4/5. Its function is as follows. Catalyzes the reversible conversion of 2-phosphoglycerate (2-PG) into phosphoenolpyruvate (PEP). It is essential for the degradation of carbohydrates via glycolysis. This Finegoldia magna (strain ATCC 29328 / DSM 20472 / WAL 2508) (Peptostreptococcus magnus) protein is Enolase.